A 246-amino-acid polypeptide reads, in one-letter code: 4-hydroxy-tetrahydrodipicolinate reductase (246 aa).

Residue 7–12 (GCSGRM) coordinates NAD(+). Arg-34 is a binding site for NADP(+). NAD(+) contacts are provided by residues 76–78 (ATT) and 102–105 (CPNT). Residue His-135 is the Proton donor/acceptor of the active site. His-136 contacts (S)-2,3,4,5-tetrahydrodipicolinate. Lys-139 (proton donor) is an active-site residue. 145–146 (GT) is a (S)-2,3,4,5-tetrahydrodipicolinate binding site.

It belongs to the DapB family.

Its subcellular location is the cytoplasm. The enzyme catalyses (S)-2,3,4,5-tetrahydrodipicolinate + NAD(+) + H2O = (2S,4S)-4-hydroxy-2,3,4,5-tetrahydrodipicolinate + NADH + H(+). It carries out the reaction (S)-2,3,4,5-tetrahydrodipicolinate + NADP(+) + H2O = (2S,4S)-4-hydroxy-2,3,4,5-tetrahydrodipicolinate + NADPH + H(+). It participates in amino-acid biosynthesis; L-lysine biosynthesis via DAP pathway; (S)-tetrahydrodipicolinate from L-aspartate: step 4/4. Catalyzes the conversion of 4-hydroxy-tetrahydrodipicolinate (HTPA) to tetrahydrodipicolinate. The chain is 4-hydroxy-tetrahydrodipicolinate reductase from Chlamydia felis (strain Fe/C-56) (Chlamydophila felis).